Here is a 491-residue protein sequence, read N- to C-terminus: Cobyric acid synthase (491 aa).

One can recognise a GATase cobBQ-type domain in the interval 250-437 (RLRVVVPVLP…LHGIFDHPAA (188 aa)). Residue Cys-331 is the Nucleophile of the active site. His-429 is a catalytic residue.

The protein belongs to the CobB/CobQ family. CobQ subfamily.

It functions in the pathway cofactor biosynthesis; adenosylcobalamin biosynthesis. Catalyzes amidations at positions B, D, E, and G on adenosylcobyrinic A,C-diamide. NH(2) groups are provided by glutamine, and one molecule of ATP is hydrogenolyzed for each amidation. This is Cobyric acid synthase from Xanthomonas campestris pv. campestris (strain B100).